Here is a 760-residue protein sequence, read N- to C-terminus: Histone-lysine N-methyltransferase EZH2 (760 aa).

Disordered regions lie at residues 208–231 (KDDA…SKKF) and 356–444 (PERA…PENV). A compositionally biased stretch (basic residues) spans 361-373 (TPSKRSTGRRRGR). A compositionally biased stretch (polar residues) spans 375-388 (PNSNSRPSTPTVNS). Residues 389–400 (ETKDTDSDREGG) are compositionally biased toward basic and acidic residues. In terms of domain architecture, CXC spans 517 to 619 (CRKIQLKKDG…SKNVSCKNCS (103 aa)). The region spanning 626–741 (KHLLLAPSDV…TGEELFFDYR (116 aa)) is the SET domain.

It belongs to the class V-like SAM-binding methyltransferase superfamily. Histone-lysine methyltransferase family. EZ subfamily. Component of the prc2/eed-ezh2 complex.

Its subcellular location is the nucleus. It carries out the reaction L-lysyl(27)-[histone H3] + 3 S-adenosyl-L-methionine = N(6),N(6),N(6)-trimethyl-L-lysyl(27)-[histone H3] + 3 S-adenosyl-L-homocysteine + 3 H(+). Functionally, polycomb group (PcG) protein. Catalytic subunit of the prc2/eed-ezh2 complex, which methylates 'Lys-9' and 'Lys-27' of histone H3, leading to transcriptional repression of the affected target gene. May regulate the circadian clock via histone methylation at the promoter of the circadian genes. This is Histone-lysine N-methyltransferase EZH2 (ezh2) from Danio rerio (Zebrafish).